A 431-amino-acid polypeptide reads, in one-letter code: D-tagatose-1,6-bisphosphate aldolase subunit KbaZ (431 aa).

Belongs to the GatZ/KbaZ family. KbaZ subfamily. In terms of assembly, forms a complex with KbaY.

The protein operates within carbohydrate metabolism; D-tagatose 6-phosphate degradation; D-glyceraldehyde 3-phosphate and glycerone phosphate from D-tagatose 6-phosphate: step 2/2. In terms of biological role, component of the tagatose-1,6-bisphosphate aldolase KbaYZ that is required for full activity and stability of the Y subunit. Could have a chaperone-like function for the proper and stable folding of KbaY. When expressed alone, KbaZ does not show any aldolase activity. This chain is D-tagatose-1,6-bisphosphate aldolase subunit KbaZ, found in Citrobacter koseri (strain ATCC BAA-895 / CDC 4225-83 / SGSC4696).